The chain runs to 377 residues: Queuine tRNA-ribosyltransferase (377 aa).

The active-site Proton acceptor is the aspartate 93. Substrate is bound by residues aspartate 93–phenylalanine 97, aspartate 147, glutamine 191, and glycine 218. The tract at residues glycine 249 to aspartate 255 is RNA binding. Catalysis depends on aspartate 268, which acts as the Nucleophile. Residues threonine 273–arginine 277 are RNA binding; important for wobble base 34 recognition. Residues cysteine 306, cysteine 308, cysteine 311, and histidine 337 each coordinate Zn(2+).

It belongs to the queuine tRNA-ribosyltransferase family. In terms of assembly, homodimer. Within each dimer, one monomer is responsible for RNA recognition and catalysis, while the other monomer binds to the replacement base PreQ1. The cofactor is Zn(2+).

It catalyses the reaction 7-aminomethyl-7-carbaguanine + guanosine(34) in tRNA = 7-aminomethyl-7-carbaguanosine(34) in tRNA + guanine. It functions in the pathway tRNA modification; tRNA-queuosine biosynthesis. Functionally, catalyzes the base-exchange of a guanine (G) residue with the queuine precursor 7-aminomethyl-7-deazaguanine (PreQ1) at position 34 (anticodon wobble position) in tRNAs with GU(N) anticodons (tRNA-Asp, -Asn, -His and -Tyr). Catalysis occurs through a double-displacement mechanism. The nucleophile active site attacks the C1' of nucleotide 34 to detach the guanine base from the RNA, forming a covalent enzyme-RNA intermediate. The proton acceptor active site deprotonates the incoming PreQ1, allowing a nucleophilic attack on the C1' of the ribose to form the product. After dissociation, two additional enzymatic reactions on the tRNA convert PreQ1 to queuine (Q), resulting in the hypermodified nucleoside queuosine (7-(((4,5-cis-dihydroxy-2-cyclopenten-1-yl)amino)methyl)-7-deazaguanosine). This is Queuine tRNA-ribosyltransferase from Oleidesulfovibrio alaskensis (strain ATCC BAA-1058 / DSM 17464 / G20) (Desulfovibrio alaskensis).